Here is a 488-residue protein sequence, read N- to C-terminus: Ribulose bisphosphate carboxylase large chain (488 aa).

Positions 127 and 177 each coordinate substrate. K179 functions as the Proton acceptor in the catalytic mechanism. K181 contacts substrate. Mg(2+)-binding residues include K205, D207, and E208. N6-carboxylysine is present on K205. The Proton acceptor role is filled by H297. Substrate-binding residues include R298, H330, and S382.

This sequence belongs to the RuBisCO large chain family. Type I subfamily. Heterohexadecamer of 8 large chains and 8 small chains. It depends on Mg(2+) as a cofactor.

Its subcellular location is the plastid. It localises to the chloroplast. It catalyses the reaction 2 (2R)-3-phosphoglycerate + 2 H(+) = D-ribulose 1,5-bisphosphate + CO2 + H2O. It carries out the reaction D-ribulose 1,5-bisphosphate + O2 = 2-phosphoglycolate + (2R)-3-phosphoglycerate + 2 H(+). Its function is as follows. RuBisCO catalyzes two reactions: the carboxylation of D-ribulose 1,5-bisphosphate, the primary event in carbon dioxide fixation, as well as the oxidative fragmentation of the pentose substrate in the photorespiration process. Both reactions occur simultaneously and in competition at the same active site. The sequence is that of Ribulose bisphosphate carboxylase large chain from Olisthodiscus luteus (Marine phytoflagellate).